Here is a 567-residue protein sequence, read N- to C-terminus: Zinc finger protein 512 (567 aa).

The interval 1–34 (MSSRLGAVPATPGPTPFKQQRSTRIVGAKNSRTQ) is disordered. Glycyl lysine isopeptide (Lys-Gly) (interchain with G-Cter in SUMO2) cross-links involve residues lysine 18 and lysine 84. The disordered stretch occupies residues 87–148 (AASHVEGPGG…QTRRIRKEPP (62 aa)). Basic residues predominate over residues 119–130 (KKHKLYGRKQRP). The C2H2-type 1 zinc-finger motif lies at 197-220 (FTCHHCGKQLRSLAGMKYHVMANH). Lysine 227 is covalently cross-linked (Glycyl lysine isopeptide (Lys-Gly) (interchain with G-Cter in SUMO2)). A C2H2-type 2 zinc finger spans residues 287–310 (LKCHHCGKPYRSKAGLAYHLRSEH). Residue lysine 333 forms a Glycyl lysine isopeptide (Lys-Gly) (interchain with G-Cter in SUMO2) linkage. The segment at 406-430 (IQCPNQGCEAVYSSVSGLKAHLGSC) adopts a C2H2-type 3; atypical zinc-finger fold. The C2H2-type 3 zinc-finger motif lies at 440–463 (YKCLLCQKEFVSESGVKYHINSVH). The segment covering 485–494 (KQRQQEEEKR) has biased composition (basic and acidic residues). Residues 485–567 (KQRQQEEEKR…PKTNHKRGKK (83 aa)) are disordered. The span at 495-508 (RQQHRSRRSLRRRQ) shows a compositional bias: basic residues. Residues 523–544 (VGKDQRRNHEELLVATSRKEPE) show a composition bias toward basic and acidic residues. Residues 556–567 (RSPKTNHKRGKK) show a composition bias toward basic residues.

It belongs to the krueppel C2H2-type zinc-finger protein family.

Its subcellular location is the nucleus. Functionally, may be involved in transcriptional regulation. The chain is Zinc finger protein 512 (ZNF512) from Bos taurus (Bovine).